Reading from the N-terminus, the 353-residue chain is DNA-directed RNA polymerase subunit alpha (353 aa).

Residues 1 to 234 (MVREKVTVST…DLFIPFLHTE (234 aa)) form an alpha N-terminal domain (alpha-NTD) region. Positions 267–353 (KRALKSIFID…LAQLIDSKSG (87 aa)) are alpha C-terminal domain (alpha-CTD).

Belongs to the RNA polymerase alpha chain family. As to quaternary structure, in plastids the minimal PEP RNA polymerase catalytic core is composed of four subunits: alpha, beta, beta', and beta''. When a (nuclear-encoded) sigma factor is associated with the core the holoenzyme is formed, which can initiate transcription.

The protein resides in the plastid. The protein localises to the chloroplast. It catalyses the reaction RNA(n) + a ribonucleoside 5'-triphosphate = RNA(n+1) + diphosphate. DNA-dependent RNA polymerase catalyzes the transcription of DNA into RNA using the four ribonucleoside triphosphates as substrates. The protein is DNA-directed RNA polymerase subunit alpha of Daucus carota (Wild carrot).